We begin with the raw amino-acid sequence, 66 residues long: Large ribosomal subunit protein uL29 (66 aa).

It belongs to the universal ribosomal protein uL29 family.

The sequence is that of Large ribosomal subunit protein uL29 from Methylibium petroleiphilum (strain ATCC BAA-1232 / LMG 22953 / PM1).